Reading from the N-terminus, the 431-residue chain is Chaperone SurA (431 aa).

The first 22 residues, 1 to 22, serve as a signal peptide directing secretion; sequence MNLKKLLTSAVLSISLCQSAFA. PpiC domains lie at 173–274 and 283–383; these read AEEY…KVQD and TTET…QLLD.

It is found in the periplasm. It carries out the reaction [protein]-peptidylproline (omega=180) = [protein]-peptidylproline (omega=0). In terms of biological role, chaperone involved in the correct folding and assembly of outer membrane proteins. Recognizes specific patterns of aromatic residues and the orientation of their side chains, which are found more frequently in integral outer membrane proteins. May act in both early periplasmic and late outer membrane-associated steps of protein maturation. This chain is Chaperone SurA, found in Pseudoalteromonas translucida (strain TAC 125).